A 355-amino-acid chain; its full sequence is UDP-N-acetylglucosamine--N-acetylmuramyl-(pentapeptide) pyrophosphoryl-undecaprenol N-acetylglucosamine transferase (355 aa).

UDP-N-acetyl-alpha-D-glucosamine-binding positions include 15–17, Asn-127, Arg-163, Ser-191, Ile-244, 263–268, and Gln-288; these read TGG and ALTVSE.

It belongs to the glycosyltransferase 28 family. MurG subfamily.

The protein resides in the cell inner membrane. The enzyme catalyses di-trans,octa-cis-undecaprenyl diphospho-N-acetyl-alpha-D-muramoyl-L-alanyl-D-glutamyl-meso-2,6-diaminopimeloyl-D-alanyl-D-alanine + UDP-N-acetyl-alpha-D-glucosamine = di-trans,octa-cis-undecaprenyl diphospho-[N-acetyl-alpha-D-glucosaminyl-(1-&gt;4)]-N-acetyl-alpha-D-muramoyl-L-alanyl-D-glutamyl-meso-2,6-diaminopimeloyl-D-alanyl-D-alanine + UDP + H(+). It participates in cell wall biogenesis; peptidoglycan biosynthesis. Cell wall formation. Catalyzes the transfer of a GlcNAc subunit on undecaprenyl-pyrophosphoryl-MurNAc-pentapeptide (lipid intermediate I) to form undecaprenyl-pyrophosphoryl-MurNAc-(pentapeptide)GlcNAc (lipid intermediate II). The chain is UDP-N-acetylglucosamine--N-acetylmuramyl-(pentapeptide) pyrophosphoryl-undecaprenol N-acetylglucosamine transferase from Escherichia coli (strain 55989 / EAEC).